A 273-amino-acid chain; its full sequence is Undecaprenyl-diphosphatase (273 aa).

The next 7 helical transmembrane spans lie at 6-26 (SLLI…LPVS), 45-65 (AKTF…VMFW), 90-110 (LTLI…LVFH), 116-136 (LFNP…LIAA), 190-210 (YAAS…ATVL), 222-242 (ADIP…LIAI), and 252-272 (ISFI…YVVF).

The protein belongs to the UppP family.

The protein localises to the cell inner membrane. The enzyme catalyses di-trans,octa-cis-undecaprenyl diphosphate + H2O = di-trans,octa-cis-undecaprenyl phosphate + phosphate + H(+). Catalyzes the dephosphorylation of undecaprenyl diphosphate (UPP). Confers resistance to bacitracin. The chain is Undecaprenyl-diphosphatase from Salmonella heidelberg (strain SL476).